A 20-amino-acid chain; its full sequence is Antimicrobial peptide EP-20 (20 aa).

Residues 1–20 are disordered; the sequence is EGPVGLADPDGPASAPLGAP.

Its subcellular location is the secreted. Its function is as follows. The synthetic peptide inhibits growth of fungus P.capsici and partially that of V.dahliae, F.graminearum and F.omysporum. This is Antimicrobial peptide EP-20 from Xenorhabdus budapestensis.